Consider the following 329-residue polypeptide: Lipoyl synthase (329 aa).

A disordered region spans residues 1-23 (MTDLTATPAPAEPAASAYDPTAK). Residues C76, C81, C87, C102, C106, C109, and S316 each coordinate [4Fe-4S] cluster. Residues 87 to 305 (CFGKGTATFM…EEEAYKMGFT (219 aa)) form the Radical SAM core domain.

The protein belongs to the radical SAM superfamily. Lipoyl synthase family. It depends on [4Fe-4S] cluster as a cofactor.

Its subcellular location is the cytoplasm. It catalyses the reaction [[Fe-S] cluster scaffold protein carrying a second [4Fe-4S](2+) cluster] + N(6)-octanoyl-L-lysyl-[protein] + 2 oxidized [2Fe-2S]-[ferredoxin] + 2 S-adenosyl-L-methionine + 4 H(+) = [[Fe-S] cluster scaffold protein] + N(6)-[(R)-dihydrolipoyl]-L-lysyl-[protein] + 4 Fe(3+) + 2 hydrogen sulfide + 2 5'-deoxyadenosine + 2 L-methionine + 2 reduced [2Fe-2S]-[ferredoxin]. Its pathway is protein modification; protein lipoylation via endogenous pathway; protein N(6)-(lipoyl)lysine from octanoyl-[acyl-carrier-protein]: step 2/2. Catalyzes the radical-mediated insertion of two sulfur atoms into the C-6 and C-8 positions of the octanoyl moiety bound to the lipoyl domains of lipoate-dependent enzymes, thereby converting the octanoylated domains into lipoylated derivatives. The protein is Lipoyl synthase of Burkholderia pseudomallei (strain 1106a).